We begin with the raw amino-acid sequence, 305 residues long: tRNA pseudouridine synthase B (305 aa).

Asp-48 acts as the Nucleophile in catalysis.

The protein belongs to the pseudouridine synthase TruB family. Type 1 subfamily.

It carries out the reaction uridine(55) in tRNA = pseudouridine(55) in tRNA. In terms of biological role, responsible for synthesis of pseudouridine from uracil-55 in the psi GC loop of transfer RNAs. The polypeptide is tRNA pseudouridine synthase B (Mannheimia succiniciproducens (strain KCTC 0769BP / MBEL55E)).